A 206-amino-acid chain; its full sequence is Probable thymidylate kinase (206 aa).

7–14 (GIDGSGKS) is a binding site for ATP.

It belongs to the thymidylate kinase family.

The catalysed reaction is dTMP + ATP = dTDP + ADP. The polypeptide is Probable thymidylate kinase (Methanospirillum hungatei JF-1 (strain ATCC 27890 / DSM 864 / NBRC 100397 / JF-1)).